The primary structure comprises 223 residues: MDTLKQLIDYYQTNGSYVMEEFWRHFLMSAYGVIFAAIIAIPLGVYIARKKRLAGWVIQIANIIQTIPALAMLAVLMLIMGLGTNTVVLSLFLYSLLPILKNTYTGIRNVDGALLESGKAMGMTKWQVLRLIEMPLALSVIMAGIRNALVIAIGVAAIGTFVGAGGLGDIIVRGTNATNGTAIILAGAIPTAVMAILADVLLGWVERTLNPVKNKRKPLTEAL.

Residues 22–202 (FWRHFLMSAY…VMAILADVLL (181 aa)) form the ABC transmembrane type-1 domain. A run of 5 helical transmembrane segments spans residues 27–47 (LMSA…GVYI), 63–83 (IIQT…MGLG), 87–107 (VVLS…YTGI), 148–168 (ALVI…GGLG), and 182–202 (AIIL…DVLL).

The protein belongs to the binding-protein-dependent transport system permease family. The complex is composed of two ATP-binding proteins (OpuCA), two transmembrane proteins (OpuCB and OpuCD) and a solute-binding protein (OpuCC).

It localises to the cell membrane. Functionally, part of the ABC transporter complex OpuCABCD involved in carnitine uptake. Probably responsible for the translocation of the substrate across the membrane. Involved, with BetL and GbuABC, in osmoprotection and cryoprotection of Listeria. Can also mediate weak glycine betaine transport. In Listeria monocytogenes serotype 1/2a (strain 10403S), this protein is Carnitine transport permease protein OpuCD (opuCD).